The sequence spans 517 residues: Maturase K (517 aa).

This sequence belongs to the intron maturase 2 family. MatK subfamily.

The protein localises to the plastid. The protein resides in the chloroplast. In terms of biological role, usually encoded in the trnK tRNA gene intron. Probably assists in splicing its own and other chloroplast group II introns. This is Maturase K from Acer pseudoplatanus (Sycamore maple).